Consider the following 529-residue polypeptide: Bifunctional purine biosynthesis protein PurH (529 aa).

Positions 2–149 (TDLHPVRRAL…KNHAFVNVVV (148 aa)) constitute an MGS-like domain.

Belongs to the PurH family.

The enzyme catalyses (6R)-10-formyltetrahydrofolate + 5-amino-1-(5-phospho-beta-D-ribosyl)imidazole-4-carboxamide = 5-formamido-1-(5-phospho-D-ribosyl)imidazole-4-carboxamide + (6S)-5,6,7,8-tetrahydrofolate. It carries out the reaction IMP + H2O = 5-formamido-1-(5-phospho-D-ribosyl)imidazole-4-carboxamide. Its pathway is purine metabolism; IMP biosynthesis via de novo pathway; 5-formamido-1-(5-phospho-D-ribosyl)imidazole-4-carboxamide from 5-amino-1-(5-phospho-D-ribosyl)imidazole-4-carboxamide (10-formyl THF route): step 1/1. It functions in the pathway purine metabolism; IMP biosynthesis via de novo pathway; IMP from 5-formamido-1-(5-phospho-D-ribosyl)imidazole-4-carboxamide: step 1/1. The chain is Bifunctional purine biosynthesis protein PurH from Ruegeria sp. (strain TM1040) (Silicibacter sp.).